A 125-amino-acid chain; its full sequence is MASIASSVAVRLGLTQVLPNKNFSSPRSTRLVVRAAEEAAAAPAAASPEGEAPKAAAKPPPIGPKRGSKVRIMRKESYWYKGVGSVVAVDQDPKTRYPVVVRFNKVNYANVSTNNYALDEIQEVA.

The transit peptide at 1 to 34 (MASIASSVAVRLGLTQVLPNKNFSSPRSTRLVVR) directs the protein to the chloroplast. Positions 42–57 (APAAASPEGEAPKAAA) are enriched in low complexity. Residues 42 to 68 (APAAASPEGEAPKAAAKPPPIGPKRGS) form a disordered region.

This sequence belongs to the PsaE family.

It is found in the plastid. The protein resides in the chloroplast thylakoid membrane. Its function is as follows. Stabilizes the interaction between PsaC and the PSI core, assists the docking of the ferredoxin to PSI and interacts with ferredoxin-NADP oxidoreductase. The chain is Photosystem I reaction center subunit IV, chloroplastic (PSAE-1) from Spinacia oleracea (Spinach).